The chain runs to 187 residues: Ponticulin-like protein K (187 aa).

The N-terminal stretch at 1–19 is a signal peptide; sequence MKNLILLFLLISIINLIQS. N-linked (GlcNAc...) asparagine glycans are attached at residues asparagine 31, asparagine 70, asparagine 86, asparagine 93, asparagine 119, asparagine 128, asparagine 146, asparagine 160, and asparagine 161. The segment covering 115–146 has biased composition (low complexity); the sequence is PSPSNSSNPSPSPNTTSSSSLSSSSLNSNEPN. The disordered stretch occupies residues 115–161; that stretch reads PSPSNSSNPSPSPNTTSSSSLSSSSLNSNEPNQTTKPPKTNEPQKNN. The span at 147 to 161 shows a compositional bias: polar residues; sequence QTTKPPKTNEPQKNN. Residue asparagine 161 is the site of GPI-like-anchor amidated asparagine attachment. A propeptide spans 162–187 (removed in mature form); sequence STSNIPNFFAIFGFLVLIIFILGDKI.

It belongs to the ponticulin family. The GPI-like-anchor contains a phosphoceramide group, rather than a phosphatidyl group.

The protein resides in the cell membrane. Functionally, binds F-actin and nucleates actin assembly. This chain is Ponticulin-like protein K (ponK), found in Dictyostelium discoideum (Social amoeba).